Reading from the N-terminus, the 100-residue chain is Urease subunit gamma (100 aa).

Belongs to the urease gamma subunit family. As to quaternary structure, heterotrimer of UreA (gamma), UreB (beta) and UreC (alpha) subunits. Three heterotrimers associate to form the active enzyme.

The protein resides in the cytoplasm. It catalyses the reaction urea + 2 H2O + H(+) = hydrogencarbonate + 2 NH4(+). Its pathway is nitrogen metabolism; urea degradation; CO(2) and NH(3) from urea (urease route): step 1/1. The protein is Urease subunit gamma of Rhodopseudomonas palustris (strain BisB18).